A 354-amino-acid chain; its full sequence is UPF0283 protein YcjF (354 aa).

Helical transmembrane passes span 71–91 (MVTV…VQWV), 101–121 (IALG…GSVV), and 214–234 (ESAL…FIAW).

Belongs to the UPF0283 family.

The protein resides in the cell inner membrane. The chain is UPF0283 protein YcjF (ycjF) from Yersinia enterocolitica.